Reading from the N-terminus, the 96-residue chain is NADH-ubiquinone oxidoreductase chain 4L (96 aa).

A run of 3 helical transmembrane segments spans residues 1–21, 24–44, and 57–77; these read MNPTTFIISFMIALSGLAFYQ, LLSLFLCLEGMALSVFCLMAI, and LPLIMLTFSVCEAGLSLVLLV.

Belongs to the complex I subunit 4L family.

It is found in the mitochondrion membrane. The enzyme catalyses a ubiquinone + NADH + 5 H(+)(in) = a ubiquinol + NAD(+) + 4 H(+)(out). In terms of biological role, core subunit of the mitochondrial membrane respiratory chain NADH dehydrogenase (Complex I) which catalyzes electron transfer from NADH through the respiratory chain, using ubiquinone as an electron acceptor. Part of the enzyme membrane arm which is embedded in the lipid bilayer and involved in proton translocation. This chain is NADH-ubiquinone oxidoreductase chain 4L (MT-ND4L), found in Myxine glutinosa (Atlantic hagfish).